The chain runs to 33 residues: Dermaseptin-H6 (33 aa).

Residue L33 is modified to Leucine amide.

Expressed by the skin glands.

Its subcellular location is the secreted. Its function is as follows. Has antimicrobial activity. The sequence is that of Dermaseptin-H6 from Pithecopus hypochondrialis (Orange-legged leaf frog).